A 342-amino-acid polypeptide reads, in one-letter code: Dihydroorotase (342 aa).

Zn(2+) is bound by residues H13 and H15. Substrate is bound by residues 15–17 (HLR) and N41. Positions 98, 135, and 173 each coordinate Zn(2+). N6-carboxylysine is present on K98. A substrate-binding site is contributed by H135. L218 is a substrate binding site. D246 is a binding site for Zn(2+). D246 is an active-site residue. 2 residues coordinate substrate: H250 and A262.

This sequence belongs to the metallo-dependent hydrolases superfamily. DHOase family. Class II DHOase subfamily. Homodimer. The cofactor is Zn(2+).

The catalysed reaction is (S)-dihydroorotate + H2O = N-carbamoyl-L-aspartate + H(+). Its pathway is pyrimidine metabolism; UMP biosynthesis via de novo pathway; (S)-dihydroorotate from bicarbonate: step 3/3. Its function is as follows. Catalyzes the reversible cyclization of carbamoyl aspartate to dihydroorotate. This Vibrio parahaemolyticus serotype O3:K6 (strain RIMD 2210633) protein is Dihydroorotase.